Here is a 108-residue protein sequence, read N- to C-terminus: UPF0145 protein gll1048 (108 aa).

The protein belongs to the UPF0145 family.

This Gloeobacter violaceus (strain ATCC 29082 / PCC 7421) protein is UPF0145 protein gll1048.